A 103-amino-acid chain; its full sequence is UPF0473 protein SSA_2239 (103 aa).

The protein belongs to the UPF0473 family.

The protein is UPF0473 protein SSA_2239 of Streptococcus sanguinis (strain SK36).